The sequence spans 594 residues: Frizzled and smoothened-like protein A (594 aa).

Residues 1–22 form the signal peptide; the sequence is MVDIRKSLFFIIFFIFYNYVNS. Topologically, residues 23 to 248 are extracellular; sequence QKAINSDAFC…NEWYQFKDLT (226 aa). In terms of domain architecture, FZ spans 27–173; that stretch reads NSDAFCQKKT…SNYDLQCLNI (147 aa). Cystine bridges form between cysteine 32–cysteine 98 and cysteine 41–cysteine 91. Residues asparagine 55 and asparagine 106 are each glycosylated (N-linked (GlcNAc...) asparagine). Cysteine 117 and cysteine 170 are disulfide-bonded. Residues asparagine 182, asparagine 189, asparagine 195, and asparagine 206 are each glycosylated (N-linked (GlcNAc...) asparagine). The chain crosses the membrane as a helical span at residues 249 to 269; sequence TVTGVISFVCIFFNIFIYGFL. Residues 270-277 lie on the Cytoplasmic side of the membrane; it reads NKKHDRHT. A helical membrane pass occupies residues 278-298; it reads IGILCLSFSLWCCMLSDLIVA. At 299 to 329 the chain is on the extracellular side; it reads SSPDYSLVCPEPGRFARIHDSRCVANGIIFQ. Residues 330-350 traverse the membrane as a helical segment; the sequence is WGAVCTTMFWSAMAIDLYLVI. Topologically, residues 351 to 361 are cytoplasmic; the sequence is KKLSLPAFTVK. Residues 362 to 382 traverse the membrane as a helical segment; the sequence is YFVAAIFTLALLFTTVPLAWD. Residues 383 to 403 lie on the Extracellular side of the membrane; that stretch reads DYGYGFGGVGCWIMSNSVQNG. The helical transmembrane segment at 404–424 threads the bilayer; the sequence is CFWIPMLICLLIGAVSICLII. Residues 425-448 are Cytoplasmic-facing; that stretch reads YEIVKVFKNVGRSGISIILANARL. A helical membrane pass occupies residues 449–469; it reads FGIVSFIFIEYIYLFVYHFWV. Residues 470-507 are Extracellular-facing; it reads QENTEKFTQNITDWVICVQTTGSSDGCPLPKAVPYATQ. N-linked (GlcNAc...) asparagine glycosylation occurs at asparagine 479. The helical transmembrane segment at 508-528 threads the bilayer; sequence FIFLFFLRLLGIEVCIFYGIN. Residues 529–594 are Cytoplasmic-facing; the sequence is SRSKNIILES…SKNGGDDDDL (66 aa).

It belongs to the G-protein coupled receptor Fz/Smo family.

Its subcellular location is the membrane. This chain is Frizzled and smoothened-like protein A (fslA), found in Dictyostelium discoideum (Social amoeba).